Reading from the N-terminus, the 906-residue chain is ATP-dependent DNA helicase DDX11 (906 aa).

The 434-residue stretch at 9–442 (GGIHFPFPFP…KNLMYIKQIL (434 aa)) folds into the Helicase ATP-binding domain. Residue 44 to 51 (SPTGTGKS) participates in ATP binding. A disordered region spans residues 78 to 111 (APGSGPPSSEKNSLLTSSSCQEPTDTPRPAGEPD). Positions 85–96 (SSEKNSLLTSSS) are enriched in low complexity. Ser-260 carries the post-translational modification Phosphoserine. Residues Cys-265 and Cys-283 each coordinate [4Fe-4S] cluster. Positions 284–301 (VDMQRSKREKNGTGEDKP) are enriched in basic and acidic residues. Positions 284–310 (VDMQRSKREKNGTGEDKPKRKRQKIQT) are disordered. Positions 312 and 347 each coordinate [4Fe-4S] cluster. The short motif at 390–393 (DEAH) is the DEAH box element.

The protein belongs to the DEAD box helicase family. DEAH subfamily. DDX11/CHL1 sub-subfamily. In terms of assembly, associates with the CTF18-RFC complex. Associates with a cohesin complex composed of RAD21, SMC1 proteins and SMC3. Interacts with CHTF18. Interacts with DSCC1. Interacts with FEN1; this interaction is direct and increases flap endonuclease activity of FEN1. Interacts with PCNA. Interacts with POLR1A and UBTF. Interacts with RAD21, SMC1 proteins and SMC3. Interacts with RFC2. Interacts with TIMELESS; this interaction increases recruitment of both proteins onto chromatin in response to replication stress induction by hydroxyurea. Requires [4Fe-4S] cluster as cofactor.

It localises to the nucleus. Its subcellular location is the nucleolus. The protein localises to the cytoplasm. It is found in the cytoskeleton. The protein resides in the spindle pole. It localises to the midbody. Its subcellular location is the microtubule organizing center. The protein localises to the centrosome. The catalysed reaction is Couples ATP hydrolysis with the unwinding of duplex DNA at the replication fork by translocating in the 5'-3' direction. This creates two antiparallel DNA single strands (ssDNA). The leading ssDNA polymer is the template for DNA polymerase III holoenzyme which synthesizes a continuous strand.. It carries out the reaction ATP + H2O = ADP + phosphate + H(+). Functionally, DNA-dependent ATPase and ATP-dependent DNA helicase that participates in various functions in genomic stability, including DNA replication, DNA repair and heterochromatin organization as well as in ribosomal RNA synthesis. Its double-stranded DNA helicase activity requires either a minimal 5'-single-stranded tail length of approximately 15 nt (flap substrates) or 10 nt length single-stranded gapped DNA substrates of a partial duplex DNA structure for helicase loading and translocation along DNA in a 5' to 3' direction. The helicase activity is capable of displacing duplex regions up to 100 bp, which can be extended up to 500 bp by the replication protein A (RPA) or the cohesion CTF18-replication factor C (Ctf18-RFC) complex activities. Also shows ATPase- and helicase activities on substrates that mimic key DNA intermediates of replication, repair and homologous recombination reactions, including forked duplex, anti-parallel G-quadruplex and three-stranded D-loop DNA molecules. Plays a role in DNA double-strand break (DSB) repair at the DNA replication fork during DNA replication recovery from DNA damage. Recruited with TIMELESS factor upon DNA-replication stress response at DNA replication fork to preserve replication fork progression, and hence ensure DNA replication fidelity. Also cooperates with TIMELESS factor during DNA replication to regulate proper sister chromatid cohesion and mitotic chromosome segregation. Stimulates 5'-single-stranded DNA flap endonuclease activity of FEN1 in an ATP- and helicase-independent manner; and hence it may contribute in Okazaki fragment processing at DNA replication fork during lagging strand DNA synthesis. Its ability to function at DNA replication fork is modulated by its binding to long non-coding RNA (lncRNA) cohesion regulator non-coding RNA DDX11-AS1/CONCR, which is able to increase both DDX11 ATPase activity and binding to DNA replicating regions. Also plays a role in heterochromatin organization. Involved in rRNA transcription activation through binding to active hypomethylated rDNA gene loci by recruiting UBTF and the RNA polymerase Pol I transcriptional machinery. Plays a role in embryonic development and prevention of aneuploidy. Involved in melanoma cell proliferation and survival. Associates with chromatin at DNA replication fork regions. Binds to single- and double-stranded DNAs. This Mus musculus (Mouse) protein is ATP-dependent DNA helicase DDX11.